Consider the following 203-residue polypeptide: Ras-related protein RABG3b (203 aa).

15–22 (GDSGVGKT) lines the GTP pocket. Residues 37–45 (YKATIGADF) carry the Effector region motif. Residues 63-67 (DTAGQ), 125-128 (NKVD), and 158-159 (SA) each bind GTP. 2 S-geranylgeranyl cysteine lipidation sites follow: cysteine 201 and cysteine 203. Cysteine 203 is modified (cysteine methyl ester).

This sequence belongs to the small GTPase superfamily. Rab family. Interacts with VPS39. In terms of tissue distribution, expressed in xylem cells of inflorescence stems.

It localises to the cell membrane. Its function is as follows. Intracellular vesicle trafficking and protein transport. Functions in autophagy. Involved in xylem and tracheary element differentiation. This Arabidopsis thaliana (Mouse-ear cress) protein is Ras-related protein RABG3b (RABG3B).